We begin with the raw amino-acid sequence, 907 residues long: Clathrin coat assembly protein AP180 (907 aa).

Residues 14–145 (QYSVTGSAVA…FSYRQMAFDF (132 aa)) form the ENTH domain. Disordered stretches follow at residues 285–326 (LEGK…DTSP), 342–380 (TSKP…TAWG), 393–414 (SVPS…PTTT), and 505–525 (VPVV…APSP). A phosphoserine mark is found at Ser-296, Ser-300, and Ser-306. Over residues 302–324 (LSKSSPATTVTSPNSTPAKTIDT) the composition is skewed to polar residues. Thr-310 carries O-linked (GlcNAc) threonine glycosylation. Residue Ser-313 is modified to Phosphoserine. Thr-317 carries the phosphothreonine modification. The span at 505–515 (VPVVTPTASTA) shows a compositional bias: low complexity. Residues 516-525 (PPVPATAPSP) show a composition bias toward pro residues. Ser-596, Ser-602, Ser-623, Ser-629, and Ser-763 each carry phosphoserine. Residue Arg-865 is modified to Asymmetric dimethylarginine; alternate. Position 865 is an omega-N-methylarginine; alternate (Arg-865). Positions 867-907 (PFGAAAVPGTQLSPSPTPASQSPKKPPAKDPLADLNIKDFL) are disordered. Residues 893–907 (PAKDPLADLNIKDFL) are compositionally biased toward basic and acidic residues.

This sequence belongs to the PICALM/SNAP91 family. Binds AP2A2. Interacts with AP2B1; clathrin competes with SNAP91. Thr-310 can be modified by the addition of N-acetylglucosamine which can be further phosphorylated. There is no evidence for direct Thr-310 phosphorylation.

It is found in the cell membrane. The protein resides in the membrane. Its subcellular location is the coated pit. Adaptins are components of the adapter complexes which link clathrin to receptors in coated vesicles. Clathrin-associated protein complexes are believed to interact with the cytoplasmic tails of membrane proteins, leading to their selection and concentration. Binding of AP180 to clathrin triskelia induces their assembly into 60-70 nm coats. The polypeptide is Clathrin coat assembly protein AP180 (SNAP91) (Homo sapiens (Human)).